We begin with the raw amino-acid sequence, 176 residues long: Protein GrpE (176 aa).

Residues 1 to 31 (MSEQKQEFENENAENSEHLQDENLQNIEDVE) form a disordered region.

The protein belongs to the GrpE family. As to quaternary structure, homodimer.

The protein localises to the cytoplasm. In terms of biological role, participates actively in the response to hyperosmotic and heat shock by preventing the aggregation of stress-denatured proteins, in association with DnaK and GrpE. It is the nucleotide exchange factor for DnaK and may function as a thermosensor. Unfolded proteins bind initially to DnaJ; upon interaction with the DnaJ-bound protein, DnaK hydrolyzes its bound ATP, resulting in the formation of a stable complex. GrpE releases ADP from DnaK; ATP binding to DnaK triggers the release of the substrate protein, thus completing the reaction cycle. Several rounds of ATP-dependent interactions between DnaJ, DnaK and GrpE are required for fully efficient folding. The sequence is that of Protein GrpE from Campylobacter jejuni subsp. doylei (strain ATCC BAA-1458 / RM4099 / 269.97).